The chain runs to 366 residues: tRNA 2-selenouridine synthase (366 aa).

Positions 14-137 constitute a Rhodanese domain; the sequence is LLENRPLIDV…IRSFLINTIE (124 aa). Cys97 (S-selanylcysteine intermediate) is an active-site residue.

Belongs to the SelU family. As to quaternary structure, monomer.

The catalysed reaction is 5-methylaminomethyl-2-thiouridine(34) in tRNA + selenophosphate + (2E)-geranyl diphosphate + H2O + H(+) = 5-methylaminomethyl-2-selenouridine(34) in tRNA + (2E)-thiogeraniol + phosphate + diphosphate. It carries out the reaction 5-methylaminomethyl-2-thiouridine(34) in tRNA + (2E)-geranyl diphosphate = 5-methylaminomethyl-S-(2E)-geranyl-thiouridine(34) in tRNA + diphosphate. The enzyme catalyses 5-methylaminomethyl-S-(2E)-geranyl-thiouridine(34) in tRNA + selenophosphate + H(+) = 5-methylaminomethyl-2-(Se-phospho)selenouridine(34) in tRNA + (2E)-thiogeraniol. It catalyses the reaction 5-methylaminomethyl-2-(Se-phospho)selenouridine(34) in tRNA + H2O = 5-methylaminomethyl-2-selenouridine(34) in tRNA + phosphate. Its function is as follows. Involved in the post-transcriptional modification of the uridine at the wobble position (U34) of tRNA(Lys), tRNA(Glu) and tRNA(Gln). Catalyzes the conversion of 2-thiouridine (S2U-RNA) to 2-selenouridine (Se2U-RNA). Acts in a two-step process involving geranylation of 2-thiouridine (S2U) to S-geranyl-2-thiouridine (geS2U) and subsequent selenation of the latter derivative to 2-selenouridine (Se2U) in the tRNA chain. The chain is tRNA 2-selenouridine synthase from Shewanella frigidimarina (strain NCIMB 400).